The sequence spans 424 residues: Putative glutamate--cysteine ligase 2-3 (424 aa).

Disordered stretches follow at residues 1 to 20 (MQMA…PVLV) and 405 to 424 (GAAA…VRRP).

It belongs to the glutamate--cysteine ligase type 2 family. YbdK subfamily.

It catalyses the reaction L-cysteine + L-glutamate + ATP = gamma-L-glutamyl-L-cysteine + ADP + phosphate + H(+). In terms of biological role, ATP-dependent carboxylate-amine ligase which exhibits weak glutamate--cysteine ligase activity. The chain is Putative glutamate--cysteine ligase 2-3 from Paenarthrobacter aurescens (strain TC1).